The sequence spans 426 residues: NADH-quinone oxidoreductase subunit H 1 (426 aa).

The next 10 helical transmembrane spans lie at L22–M42, F91–I111, I124–G144, M163–L183, F206–V226, L258–W278, F299–V319, A331–P351, V357–Y377, and I392–G412.

It belongs to the complex I subunit 1 family. In terms of assembly, NDH-1 is composed of 14 different subunits. Subunits NuoA, H, J, K, L, M, N constitute the membrane sector of the complex.

It localises to the cell inner membrane. It carries out the reaction a quinone + NADH + 5 H(+)(in) = a quinol + NAD(+) + 4 H(+)(out). In terms of biological role, NDH-1 shuttles electrons from NADH, via FMN and iron-sulfur (Fe-S) centers, to quinones in the respiratory chain. The immediate electron acceptor for the enzyme in this species is believed to be ubiquinone. Couples the redox reaction to proton translocation (for every two electrons transferred, four hydrogen ions are translocated across the cytoplasmic membrane), and thus conserves the redox energy in a proton gradient. This subunit may bind ubiquinone. This Koribacter versatilis (strain Ellin345) protein is NADH-quinone oxidoreductase subunit H 1.